A 110-amino-acid chain; its full sequence is MQAKASANMVRLAPRKARLVVDLIRGKQVGEALSVLAHTNKAASPVVEKVLKSAIANAEHNYDMNIENLVVTEAYVNEGPTLKRFRPRAMGRASRINKRTSHIHIVVTEK.

This sequence belongs to the universal ribosomal protein uL22 family. In terms of assembly, part of the 50S ribosomal subunit.

In terms of biological role, this protein binds specifically to 23S rRNA; its binding is stimulated by other ribosomal proteins, e.g. L4, L17, and L20. It is important during the early stages of 50S assembly. It makes multiple contacts with different domains of the 23S rRNA in the assembled 50S subunit and ribosome. Its function is as follows. The globular domain of the protein is located near the polypeptide exit tunnel on the outside of the subunit, while an extended beta-hairpin is found that lines the wall of the exit tunnel in the center of the 70S ribosome. This Exiguobacterium sp. (strain ATCC BAA-1283 / AT1b) protein is Large ribosomal subunit protein uL22.